Reading from the N-terminus, the 138-residue chain is Large ribosomal subunit protein uL16 (138 aa).

Residues 1–13 (MLQPARRKYRKEQ) show a composition bias toward basic residues. The tract at residues 1–22 (MLQPARRKYRKEQKGRNTGIAT) is disordered.

Belongs to the universal ribosomal protein uL16 family. Part of the 50S ribosomal subunit.

Functionally, binds 23S rRNA and is also seen to make contacts with the A and possibly P site tRNAs. The protein is Large ribosomal subunit protein uL16 of Delftia acidovorans (strain DSM 14801 / SPH-1).